Reading from the N-terminus, the 476-residue chain is Sedoheptulokinase (476 aa).

This sequence belongs to the FGGY kinase family.

The protein localises to the cytoplasm. It catalyses the reaction sedoheptulose + ATP = D-sedoheptulose 7-phosphate + ADP + H(+). Acts as a modulator of macrophage activation through control of glucose metabolism. The polypeptide is Sedoheptulokinase (Shpk) (Mus musculus (Mouse)).